The sequence spans 425 residues: Glutamyl-tRNA reductase (425 aa).

Substrate contacts are provided by residues 49–52 (TCNR), S107, 112–114 (EPQ), and Q118. C50 functions as the Nucleophile in the catalytic mechanism. An NADP(+)-binding site is contributed by 187 to 192 (GAGETI).

This sequence belongs to the glutamyl-tRNA reductase family. As to quaternary structure, homodimer.

It carries out the reaction (S)-4-amino-5-oxopentanoate + tRNA(Glu) + NADP(+) = L-glutamyl-tRNA(Glu) + NADPH + H(+). Its pathway is porphyrin-containing compound metabolism; protoporphyrin-IX biosynthesis; 5-aminolevulinate from L-glutamyl-tRNA(Glu): step 1/2. Functionally, catalyzes the NADPH-dependent reduction of glutamyl-tRNA(Glu) to glutamate 1-semialdehyde (GSA). This chain is Glutamyl-tRNA reductase, found in Pseudomonas putida (strain ATCC 700007 / DSM 6899 / JCM 31910 / BCRC 17059 / LMG 24140 / F1).